A 237-amino-acid chain; its full sequence is Ribonuclease PH (237 aa).

Phosphate-binding positions include Arg-86 and 124 to 126; that span reads GTR.

Belongs to the RNase PH family. As to quaternary structure, homohexameric ring arranged as a trimer of dimers.

It catalyses the reaction tRNA(n+1) + phosphate = tRNA(n) + a ribonucleoside 5'-diphosphate. Phosphorolytic 3'-5' exoribonuclease that plays an important role in tRNA 3'-end maturation. Removes nucleotide residues following the 3'-CCA terminus of tRNAs; can also add nucleotides to the ends of RNA molecules by using nucleoside diphosphates as substrates, but this may not be physiologically important. Probably plays a role in initiation of 16S rRNA degradation (leading to ribosome degradation) during starvation. The sequence is that of Ribonuclease PH from Methylorubrum extorquens (strain CM4 / NCIMB 13688) (Methylobacterium extorquens).